A 486-amino-acid chain; its full sequence is Hematopoietic lineage cell-specific protein (486 aa).

Residues 27-66 (FVNDISEKEQRWGAKTIEGSGRTEHINIHQLRNKVSEEHD) form an involved in HAX-1 binding region. N6-acetyllysine is present on Lys41. Cortactin repeat units follow at residues 79–115 (ASHG…SQTD), 116–152 (AAKG…SQKD), and 153–189 (YSRG…SQRD). Lys123 is modified (N6-acetyllysine). Tyr140 carries the post-translational modification Phosphotyrosine. A Cortactin 4; truncated repeat occupies 190–212 (YAKGFGGQYGIQKDRVDKSAVGF). Lys192 bears the N6-acetyllysine mark. The residue at position 198 (Tyr198) is a Phosphotyrosine. Residue Tyr222 is modified to Phosphotyrosine; by FGR. An N6-acetyllysine modification is found at Lys241. Positions 243–276 (ESMAEEKRKREEEEKAQQVARRQQERKAVTKRSP) are enriched in basic and acidic residues. The segment at 243–419 (ESMAEEKRKR…SALAGSSGCP (177 aa)) is disordered. Ser275 carries the post-translational modification Phosphoserine. Residue Thr308 is modified to Phosphothreonine. The segment covering 315–324 (EPVRTSREHP) has biased composition (basic and acidic residues). Acidic residues-rich tracts occupy residues 353–383 (QVEE…DVEE) and 390–405 (EDEP…EPED). Phosphotyrosine; by SYK and FES is present on residues Tyr378 and Tyr397. Residues 406–419 (SSFSSALAGSSGCP) are compositionally biased toward low complexity. In terms of domain architecture, SH3 spans 428–486 (ALGISAVAVYDYQGEGSDELSFDPDDVITDIEMVDEGWWRGRCHGHFGLFPANYVKLLE).

In terms of assembly, associates with the SH2 and SH3 domains of LCK. Binding to he LCK SH3 domain occurs constitutively, while binding to the LCK SH2 domain occurs only upon TCR stimulation. A similar binding pattern was observed with LYN, but not with FYN in which the FYN SH2 region associates upon TCR stimulation but the FYN SH3 region does not associate regardless of TCR stimulation. Directly associates with HAX1, through binding to its C-terminal region. Interacts with HS1BP3. Interacts with FES/FPS. Interacts (via SH2 domain) with FGR. Forms a multiprotein complex with LYN and ANKRD54. Post-translationally, phosphorylated by FES. Phosphorylated by LYN, FYN and FGR after cross-linking of surface IgM on B-cells. Phosphorylation by LYN, FYN and FGR requires prior phosphorylation by SYK or FES. Expressed only in tissues and cells of hematopoietic origin.

The protein localises to the membrane. Its subcellular location is the cytoplasm. It localises to the mitochondrion. Substrate of the antigen receptor-coupled tyrosine kinase. Plays a role in antigen receptor signaling for both clonal expansion and deletion in lymphoid cells. May also be involved in the regulation of gene expression. The sequence is that of Hematopoietic lineage cell-specific protein (HCLS1) from Homo sapiens (Human).